The primary structure comprises 820 residues: G-type lectin S-receptor-like serine/threonine-protein kinase At1g11300 (820 aa).

A signal peptide spans 1-26 (MRLHESSSPFVCILVLSCFFLSVSLA). Residues 27–150 (QERAFFSGKL…SSDAYLWESF (124 aa)) form the Bulb-type lectin domain. Residues 27-436 (QERAFFSGKL…SEIKTKDKRP (410 aa)) lie on the Extracellular side of the membrane. 10 N-linked (GlcNAc...) asparagine glycosylation sites follow: N37, N58, N87, N115, N123, N173, N211, N247, N256, and N282. The EGF-like; atypical domain occupies 290-326 (PATECDNYRRCGEFATCNPRKNPLCSCIRGFRPRNLI). Cystine bridges form between C294/C306 and C300/C314. N332 and N351 each carry an N-linked (GlcNAc...) asparagine glycan. The 81-residue stretch at 345–425 (CERQNNNGSA…SGLDLYIRLA (81 aa)) folds into the PAN domain. 2 disulfides stabilise this stretch: C379/C400 and C383/C389. An N-linked (GlcNAc...) asparagine glycan is attached at N404. The helical transmembrane segment at 437–457 (ILIGTILAGGIFVVAACVLLA) threads the bilayer. Residues 458-820 (RRIVMKKRAK…NVTITDVTGR (363 aa)) lie on the Cytoplasmic side of the membrane. The region spanning 509-788 (FSLRNKLGQG…DIPEPKQPAF (280 aa)) is the Protein kinase domain. ATP-binding positions include 515–523 (LGQGGFGPV) and K537. Residues 598 to 615 (RRAKLLDWKTRFNIINGI) form a caM-binding region. The active-site Proton acceptor is the D634.

Belongs to the protein kinase superfamily. Ser/Thr protein kinase family.

The protein resides in the cell membrane. The catalysed reaction is L-seryl-[protein] + ATP = O-phospho-L-seryl-[protein] + ADP + H(+). It carries out the reaction L-threonyl-[protein] + ATP = O-phospho-L-threonyl-[protein] + ADP + H(+). This Arabidopsis thaliana (Mouse-ear cress) protein is G-type lectin S-receptor-like serine/threonine-protein kinase At1g11300.